We begin with the raw amino-acid sequence, 211 residues long: Arginine exporter protein ArgO (211 aa).

Helical transmembrane passes span 1-21 (MISY…PLGP), 37-57 (LMIA…GIFG), 68-88 (LLAL…FGAL), 111-131 (IIAT…DTFV), 147-167 (WFAL…ALLA), and 179-199 (AQRI…FQLA).

It belongs to the LysE/ArgO transporter (TC 2.A.75) family.

It is found in the cell inner membrane. It catalyses the reaction L-arginine(in) = L-arginine(out). Involved in the export of arginine. Important to control the intracellular level of arginine and the correct balance between arginine and lysine. The polypeptide is Arginine exporter protein ArgO (Salmonella schwarzengrund (strain CVM19633)).